A 188-amino-acid chain; its full sequence is Multiple organellar RNA editing factor 7, mitochondrial (188 aa).

A mitochondrion-targeting transit peptide spans 1–20 (MARIIRRPLNLTAAVRFRLS). Residues 169–188 (DAKSGVVKKKHRRKRKKKLI) form a disordered region. Residues 174 to 188 (VVKKKHRRKRKKKLI) are compositionally biased toward basic residues.

Belongs to the MORF family. Heterodimers with MORF8/RIP1, MORF5/RIP5 and MORF6/RIP6.

It is found in the mitochondrion. Functionally, involved in organellar RNA editing. Required for the processing of few RNA editing sites in mitochondria. The chain is Multiple organellar RNA editing factor 7, mitochondrial from Arabidopsis thaliana (Mouse-ear cress).